A 471-amino-acid polypeptide reads, in one-letter code: Putative multidrug resistance protein MdtD (471 aa).

13 helical membrane passes run 12 to 32 (LWIV…VNTA), 49 to 69 (MIIV…GWLA), 77 to 97 (IFFT…QAST), 102 to 124 (VMAR…LTVM), 138 to 158 (FVTL…GVLV), 165 to 185 (WIFL…LCLM), 195 to 215 (FDLS…LALD), 220 to 240 (LGIS…ALLL), 263 to 283 (FSLG…LPFM), 286 to 306 (VFLQ…MIPM), 329 to 351 (VLVA…ALAG), 393 to 413 (LLSM…GLLL), and 431 to 451 (VFLY…LIFS).

This sequence belongs to the major facilitator superfamily. TCR/Tet family.

The protein resides in the cell inner membrane. This Klebsiella pneumoniae subsp. pneumoniae (strain ATCC 700721 / MGH 78578) protein is Putative multidrug resistance protein MdtD.